Here is a 332-residue protein sequence, read N- to C-terminus: DNA-directed RNA polymerase subunit alpha (332 aa).

The alpha N-terminal domain (alpha-NTD) stretch occupies residues 1–234 (MTVTVSQVLR…DQLSVFGDFT (234 aa)). Positions 248-332 (VDPVLLRPID…PGVSQYGMLG (85 aa)) are alpha C-terminal domain (alpha-CTD).

This sequence belongs to the RNA polymerase alpha chain family. Homodimer. The RNAP catalytic core consists of 2 alpha, 1 beta, 1 beta' and 1 omega subunit. When a sigma factor is associated with the core the holoenzyme is formed, which can initiate transcription.

The catalysed reaction is RNA(n) + a ribonucleoside 5'-triphosphate = RNA(n+1) + diphosphate. In terms of biological role, DNA-dependent RNA polymerase catalyzes the transcription of DNA into RNA using the four ribonucleoside triphosphates as substrates. The chain is DNA-directed RNA polymerase subunit alpha from Xylella fastidiosa (strain M23).